A 526-amino-acid chain; its full sequence is Exodeoxyribonuclease 7 large subunit (526 aa).

The interval 497–526 (AMTTEGGTPPGGAKKRSTKPAEPTKQGSLF) is disordered.

The protein belongs to the XseA family. Heterooligomer composed of large and small subunits.

The protein localises to the cytoplasm. It catalyses the reaction Exonucleolytic cleavage in either 5'- to 3'- or 3'- to 5'-direction to yield nucleoside 5'-phosphates.. Bidirectionally degrades single-stranded DNA into large acid-insoluble oligonucleotides, which are then degraded further into small acid-soluble oligonucleotides. The polypeptide is Exodeoxyribonuclease 7 large subunit (Rhizobium etli (strain ATCC 51251 / DSM 11541 / JCM 21823 / NBRC 15573 / CFN 42)).